Here is a 215-residue protein sequence, read N- to C-terminus: NAD(P)H-hydrate epimerase (215 aa).

In terms of domain architecture, YjeF N-terminal spans 10-211 (AQRYDAHATN…DIGIYAQDRV (202 aa)). 58 to 62 (NNGGD) provides a ligand contact to (6S)-NADPHX. K(+)-binding residues include Asn59 and Asp121. Residues 125–131 (GVGLTRD) and Asp154 contribute to the (6S)-NADPHX site. Ser157 serves as a coordination point for K(+).

Belongs to the NnrE/AIBP family. The cofactor is K(+).

The catalysed reaction is (6R)-NADHX = (6S)-NADHX. The enzyme catalyses (6R)-NADPHX = (6S)-NADPHX. In terms of biological role, catalyzes the epimerization of the S- and R-forms of NAD(P)HX, a damaged form of NAD(P)H that is a result of enzymatic or heat-dependent hydration. This is a prerequisite for the S-specific NAD(P)H-hydrate dehydratase to allow the repair of both epimers of NAD(P)HX. The chain is NAD(P)H-hydrate epimerase from Levilactobacillus brevis (strain ATCC 367 / BCRC 12310 / CIP 105137 / JCM 1170 / LMG 11437 / NCIMB 947 / NCTC 947) (Lactobacillus brevis).